The following is a 950-amino-acid chain: Valine--tRNA ligase (950 aa).

The 'HIGH' region signature appears at 40 to 50; that stretch reads PNVTGSLHMGH. A 'KMSKS' region motif is present at residues 551–555; it reads KMSKS. Lys554 is a binding site for ATP. Positions 881–950 form a coiled coil; sequence LIDKSAELGR…AEQRQKIAAL (70 aa).

This sequence belongs to the class-I aminoacyl-tRNA synthetase family. ValS type 1 subfamily. Monomer.

It localises to the cytoplasm. The enzyme catalyses tRNA(Val) + L-valine + ATP = L-valyl-tRNA(Val) + AMP + diphosphate. In terms of biological role, catalyzes the attachment of valine to tRNA(Val). As ValRS can inadvertently accommodate and process structurally similar amino acids such as threonine, to avoid such errors, it has a 'posttransfer' editing activity that hydrolyzes mischarged Thr-tRNA(Val) in a tRNA-dependent manner. This Pseudomonas aeruginosa (strain ATCC 15692 / DSM 22644 / CIP 104116 / JCM 14847 / LMG 12228 / 1C / PRS 101 / PAO1) protein is Valine--tRNA ligase.